Consider the following 123-residue polypeptide: Large ribosomal subunit protein bL21 (123 aa).

Belongs to the bacterial ribosomal protein bL21 family. Part of the 50S ribosomal subunit. Contacts protein L20.

This protein binds to 23S rRNA in the presence of protein L20. The polypeptide is Large ribosomal subunit protein bL21 (Sinorhizobium fredii (strain NBRC 101917 / NGR234)).